Reading from the N-terminus, the 206-residue chain is Ephrin-A4 (206 aa).

The first 25 residues, 1–25 (MRLLPLLRTVLWAALLGSRLPGCSS), serve as a signal peptide directing secretion. An Ephrin RBD domain is found at 26 to 158 (LRHPIYWNSS…RLQVSVCCKE (133 aa)). Asparagine 33 carries N-linked (GlcNAc...) asparagine glycosylation. Positions 41-43 (RGD) match the Cell attachment site motif. 2 cysteine pairs are disulfide-bonded: cysteine 58–cysteine 99 and cysteine 86–cysteine 147. An N-linked (GlcNAc...) asparagine glycan is attached at asparagine 98. A disordered region spans residues 161 to 180 (SSHESAHPVGSPGESGTSGW). The GPI-anchor amidated serine moiety is linked to residue serine 175. Positions 176-206 (GTSGWRGGHAPSPLCLLLLLLLPILRLLRVL) are cleaved as a propeptide — removed in mature form.

The protein belongs to the ephrin family. As to expression, expressed in myogenic progenitor cells.

Its subcellular location is the cell membrane. Cell surface GPI-bound ligand for Eph receptors, a family of receptor tyrosine kinases which are crucial for migration, repulsion and adhesion during neuronal, vascular and epithelial development. Binds promiscuously Eph receptors residing on adjacent cells, leading to contact-dependent bidirectional signaling into neighboring cells. May play a role in the interaction between activated B-lymphocytes and dendritic cells in tonsils. The polypeptide is Ephrin-A4 (Efna4) (Mus musculus (Mouse)).